Here is a 530-residue protein sequence, read N- to C-terminus: AA9 family lytic polysaccharide monooxygenase C (530 aa).

Positions 1–18 (MQLKSTVHFLSLLAYTAA) are cleaved as a signal peptide. Cu(2+) is bound by residues His-19 and His-103. 2 disulfide bridges follow: Cys-72/Cys-190 and Cys-114/Cys-118. Asn-150 carries an N-linked (GlcNAc...) asparagine glycan. Gln-185 is a binding site for O2. A Cu(2+)-binding site is contributed by Tyr-187. Low complexity predominate over residues 238–251 (YGSGSSSSQNSVES). 4 disordered regions span residues 238-279 (YGSG…STSA), 297-329 (ESSSALDAPKSTDAVKSVEAKETTKVEEVSSSA), 348-375 (YSSASPSSSPVLSSSKPASTSNPEKLSS), and 492-512 (GNGASAAAEPNTGTGSGGTTP). The span at 312-324 (KSVEAKETTKVEE) shows a compositional bias: basic and acidic residues. Positions 348-368 (YSSASPSSSPVLSSSKPASTS) are enriched in low complexity.

Belongs to the polysaccharide monooxygenase AA9 family. It depends on Cu(2+) as a cofactor.

Its subcellular location is the secreted. The catalysed reaction is [(1-&gt;4)-beta-D-glucosyl]n+m + reduced acceptor + O2 = 4-dehydro-beta-D-glucosyl-[(1-&gt;4)-beta-D-glucosyl]n-1 + [(1-&gt;4)-beta-D-glucosyl]m + acceptor + H2O.. Its function is as follows. Lytic polysaccharide monooxygenase (LPMO) that depolymerizes polysaccharides via the oxidation of scissile alpha- or beta-(1-4)-glycosidic bonds, yielding C1 or C4 oxidation products. Catalysis by LPMOs requires the reduction of the active-site copper from Cu(II) to Cu(I) by a reducing agent and H(2)O(2) or O(2) as a cosubstrate. Amorphous cellulose is not a suitable substrate for LPMO9C, which may act at the surface of cellulose microfibrils without any release of soluble products. The sequence is that of AA9 family lytic polysaccharide monooxygenase C from Geotrichum candidum (Oospora lactis).